Consider the following 544-residue polypeptide: MTPAELKRLYHIIKVQLEYGLDELMPEHQLTKAPLLARKSLFWLKNKHQDKELGHRLRLALQELGPVWIKFGQMMSTRRDLFPPHIADQLALLQDQVAPFDGQLAKRDMEKALGGRLDNWFTDFDIEPLASASIAQVHTAKLKESGREIVLKVIRPDIRPVIDADLKLMHRMARIVAKSLPEARRLKPVEVVHEYEKTLLDELDLRREAANAIQLRRNFEGSEELYVPEVIPDLSSETLMVSERIYGIQVSDIETLEANGTNMKLLAERGVTVFFTQVFRDSFFHADMHPGNVFVNPENPDNPQWIGLDCGIVGTLNSEDKRYLAENLLAFFNRDYRKVAELHVDSGWVPHDTNVNDFEFAIRMVCEPIFAKPLGEISFGHVLLNLFNTARRFNMEVQPQLVLLQKTLLYVEGLGRQLYPQLDLWATAKPFLETWMMNQVGPQAVINAVKERAPFWAEKLPELPELLYDSLRQGKAMNHRMDQLYQGYRDSKRQQATGKFLFGVGATLVVCSAILVSSPYEQLSMGCGIAGVTFWLLSWRAYRR.

The 379-residue stretch at aspartate 123–leucine 501 folds into the Protein kinase domain. ATP-binding positions include leucine 129–valine 137 and lysine 152. The Proton acceptor role is filled by aspartate 287. A helical membrane pass occupies residues phenylalanine 500–tyrosine 520.

The protein belongs to the ABC1 family. UbiB subfamily.

The protein resides in the cell inner membrane. The protein operates within cofactor biosynthesis; ubiquinone biosynthesis [regulation]. Its function is as follows. Is probably a protein kinase regulator of UbiI activity which is involved in aerobic coenzyme Q (ubiquinone) biosynthesis. This Vibrio atlanticus (strain LGP32) (Vibrio splendidus (strain Mel32)) protein is Probable protein kinase UbiB.